Here is a 243-residue protein sequence, read N- to C-terminus: 4-hydroxy-tetrahydrodipicolinate reductase (243 aa).

Residues 9–14, 78–80, and 104–107 contribute to the NAD(+) site; these read GANGKM, GTS, and APNF. The Proton donor/acceptor role is filled by His134. His135 is a binding site for (S)-2,3,4,5-tetrahydrodipicolinate. Catalysis depends on Lys138, which acts as the Proton donor. Residue 144-145 coordinates (S)-2,3,4,5-tetrahydrodipicolinate; the sequence is GT.

Belongs to the DapB family.

It is found in the cytoplasm. It catalyses the reaction (S)-2,3,4,5-tetrahydrodipicolinate + NAD(+) + H2O = (2S,4S)-4-hydroxy-2,3,4,5-tetrahydrodipicolinate + NADH + H(+). The catalysed reaction is (S)-2,3,4,5-tetrahydrodipicolinate + NADP(+) + H2O = (2S,4S)-4-hydroxy-2,3,4,5-tetrahydrodipicolinate + NADPH + H(+). Its pathway is amino-acid biosynthesis; L-lysine biosynthesis via DAP pathway; (S)-tetrahydrodipicolinate from L-aspartate: step 4/4. In terms of biological role, catalyzes the conversion of 4-hydroxy-tetrahydrodipicolinate (HTPA) to tetrahydrodipicolinate. The sequence is that of 4-hydroxy-tetrahydrodipicolinate reductase from Legionella pneumophila (strain Lens).